The following is a 277-amino-acid chain: Shikimate dehydrogenase (NADP(+)) (277 aa).

Residues 17 to 19 (SRS) and T64 each bind shikimate. Residue K68 is the Proton acceptor of the active site. Positions 88 and 103 each coordinate shikimate. NADP(+) contacts are provided by residues 128–132 (GAGGS), 152–157 (NRTLDR), and L217. Y219 serves as a coordination point for shikimate. G240 is an NADP(+) binding site.

This sequence belongs to the shikimate dehydrogenase family. Homodimer.

It catalyses the reaction shikimate + NADP(+) = 3-dehydroshikimate + NADPH + H(+). It participates in metabolic intermediate biosynthesis; chorismate biosynthesis; chorismate from D-erythrose 4-phosphate and phosphoenolpyruvate: step 4/7. Its function is as follows. Involved in the biosynthesis of the chorismate, which leads to the biosynthesis of aromatic amino acids. Catalyzes the reversible NADPH linked reduction of 3-dehydroshikimate (DHSA) to yield shikimate (SA). This is Shikimate dehydrogenase (NADP(+)) from Rhodopseudomonas palustris (strain BisB18).